The primary structure comprises 421 residues: Glutamyl-tRNA reductase (421 aa).

Substrate is bound by residues 49-52, serine 109, 114-116, and glutamine 120; these read TCNR and EAQ. Cysteine 50 serves as the catalytic Nucleophile. 189 to 194 provides a ligand contact to NADP(+); sequence GAGEMC.

It belongs to the glutamyl-tRNA reductase family. As to quaternary structure, homodimer.

The enzyme catalyses (S)-4-amino-5-oxopentanoate + tRNA(Glu) + NADP(+) = L-glutamyl-tRNA(Glu) + NADPH + H(+). Its pathway is porphyrin-containing compound metabolism; protoporphyrin-IX biosynthesis; 5-aminolevulinate from L-glutamyl-tRNA(Glu): step 1/2. Catalyzes the NADPH-dependent reduction of glutamyl-tRNA(Glu) to glutamate 1-semialdehyde (GSA). In Magnetococcus marinus (strain ATCC BAA-1437 / JCM 17883 / MC-1), this protein is Glutamyl-tRNA reductase.